A 40-amino-acid chain; its full sequence is Photosystem II reaction center protein Y (40 aa).

A helical transmembrane segment spans residues 5–23 (LVLVASPILLAVGWAGFNI).

This sequence belongs to the PsbY family. PSII is composed of 1 copy each of membrane proteins PsbA, PsbB, PsbC, PsbD, PsbE, PsbF, PsbH, PsbI, PsbJ, PsbK, PsbL, PsbM, PsbT, PsbX, PsbY, PsbZ, Psb30/Ycf12, peripheral proteins PsbO, CyanoQ (PsbQ), PsbU, PsbV and a large number of cofactors. It forms dimeric complexes.

The protein resides in the cellular thylakoid membrane. Functionally, loosely associated component of the core of photosystem II (PSII), it is not always seen in crystals. PSII is a light-driven water plastoquinone oxidoreductase, using light energy to abstract electrons from H(2)O, generating a proton gradient subsequently used for ATP formation. In Synechococcus sp. (strain RCC307), this protein is Photosystem II reaction center protein Y.